Consider the following 131-residue polypeptide: Ribosome-binding factor A (131 aa).

Belongs to the RbfA family. In terms of assembly, monomer. Binds 30S ribosomal subunits, but not 50S ribosomal subunits or 70S ribosomes.

It is found in the cytoplasm. In terms of biological role, one of several proteins that assist in the late maturation steps of the functional core of the 30S ribosomal subunit. Associates with free 30S ribosomal subunits (but not with 30S subunits that are part of 70S ribosomes or polysomes). Required for efficient processing of 16S rRNA. May interact with the 5'-terminal helix region of 16S rRNA. The polypeptide is Ribosome-binding factor A (Mannheimia succiniciproducens (strain KCTC 0769BP / MBEL55E)).